Here is a 71-residue protein sequence, read N- to C-terminus: Virion membrane protein A13 homolog (71 aa).

A helical membrane pass occupies residues 1–21; the sequence is MGIIDTFVITAVTVIIFCLLI. Residues 22 to 70 lie on the Virion surface side of the membrane; that stretch reads YAAYKRYKCIPSPDDRDKVLKSTLNDDTLFNQTLTPDQVKALHRLVTSS.

This sequence belongs to the chordopoxvirinae A13 family.

It localises to the virion membrane. Essential for the encapsidation of DNA into immature virions (IV) and the subsequent maturation of IV into mature virions (MV). In Vertebrata (FPV), this protein is Virion membrane protein A13 homolog.